Reading from the N-terminus, the 418-residue chain is eIF5-mimic protein 2 (418 aa).

Over residues 1–14 (MNQKQQKPTLSGQR) the composition is skewed to polar residues. The disordered stretch occupies residues 1 to 25 (MNQKQQKPTLSGQRFKTRKRDEKER). The 168-residue stretch at 246–413 (NQQTIGARKE…KNAEEESESE (168 aa)) folds into the W2 domain.

This sequence belongs to the BZW family.

Its function is as follows. Translation initiation regulator which may repress repeat-associated non-AUG (RAN) initiated translation probably by acting as a competitive inhibitor of eukaryotic translation initiation factor 5 (EIF5) function. Enhances histone H4 gene transcription but does not seem to bind DNA directly. The protein is eIF5-mimic protein 2 (BZW1) of Gallus gallus (Chicken).